The following is a 303-amino-acid chain: Pycsar effector protein XpPycTIR (303 aa).

Residue 14–138 participates in a nucleoside 3',5'-cyclic phosphate binding; the sequence is LVATLTEHRL…RRIAATLARR (125 aa). A TIR-like region spans residues 154-273; the sequence is RVFIMSSVEA…DLAGLTTIPY (120 aa).

It localises to the cytoplasm. The enzyme catalyses NAD(+) + H2O = ADP-D-ribose + nicotinamide + H(+). In terms of biological role, pycsar (pyrimidine cyclase system for antiphage resistance) provides immunity against bacteriophage. The pyrimidine cyclase (PycC) synthesizes cyclic nucleotides in response to infection; these serve as specific second messenger signals. The signals activate the adjacent effector, leading to bacterial cell death and abortive phage infection. A clade B Pycsar system. Functionally, the effector gene of a two-gene Pycsar system. Expression of this and adjacent uridylate cyclase XpPycC (AC P0DV28) confers resistance to bacteriophage T7. When cells expressing the Pycsar system are infected by phage T7 at low multiplicity of infection (0.2 MOI) the culture survivey, at 2.0 MOI bacteria enter growth arrest. The same cells enter growth arrest after exposure to 2.5 mM cUMP but not cCMP; the effector protein responds only to the cUMP usually produced by its cognate NTP cyclase. NAD(+) levels in infected cells are depleted between 5 and 10 minutes after infection with T7 at MOI of 2. Probably only responds to cUMP. This chain is Pycsar effector protein XpPycTIR, found in Xanthomonas perforans.